A 322-amino-acid polypeptide reads, in one-letter code: Beta-1,4-galactosyltransferase 7 (322 aa).

Residues 1 to 9 lie on the Cytoplasmic side of the membrane; sequence MVNISTINW. Residues 10 to 30 traverse the membrane as a helical; Signal-anchor for type II membrane protein segment; that stretch reads VFVCGLSFCLGGIAVLSLMPL. Residues 31-322 are Lumenal-facing; that stretch reads GSDCVCPLSN…TAAAASAVQT (292 aa). 4 residues coordinate UDP-alpha-D-galactose: Pro-82, Arg-84, Asp-145, and Val-146. Asp-147 contacts Mn(2+). UDP-alpha-D-galactose-binding residues include Tyr-177, Gly-185, Trp-207, and Gly-208. Leu-209 is a binding site for beta-D-xylose. Glu-210 provides a ligand contact to UDP-alpha-D-galactose. Beta-D-xylose-binding residues include Asp-211 and Asp-212. A glycan (N-linked (GlcNAc...) asparagine) is linked at Asn-236. Positions 241, 243, and 250 each coordinate UDP-alpha-D-galactose. Mn(2+)-binding residues include His-241 and His-243. 2 disulfide bridges follow: Cys-255–Cys-310 and Cys-300–Cys-308.

It belongs to the glycosyltransferase 7 family. The cofactor is Mn(2+). As to expression, expressed in male and female adults. Expressed in head.

The protein resides in the golgi apparatus membrane. It carries out the reaction 3-O-(beta-D-xylosyl)-L-seryl-[protein] + UDP-alpha-D-galactose = 3-O-(beta-D-galactosyl-(1-&gt;4)-beta-D-xylosyl)-L-seryl-[protein] + UDP + H(+). It functions in the pathway protein modification; protein glycosylation. In terms of biological role, transfers galactose from UDP-D-Galactose (UDP-Gal) to the acceptor xylose residue in the linkage tetrasaccharide region of the glycosaminoglycan side chain of proteoglycans. No activity towards beta-GlcNAc, beta-Glc, beta-Gal, and beta-GalNAc as acceptors. In Drosophila melanogaster (Fruit fly), this protein is Beta-1,4-galactosyltransferase 7.